A 730-amino-acid chain; its full sequence is Trimethylamine dehydrogenase (730 aa).

Pro29, Cys31, Tyr61, and Glu104 together coordinate FMN. Cys31 carries the post-translational modification S-6-FMN cysteine. Tyr170–His173 contacts substrate. The active-site Proton donor is the Tyr175. The FMN site is built by Arg223, Asp268, Arg300, Ala322, and Arg323. Positions 346, 349, 352, and 365 each coordinate [4Fe-4S] cluster. Residues Ser401, Asp420, Thr421, His428, Met471, and Asp675 each coordinate ADP.

The protein in the N-terminal section; belongs to the NADH:flavin oxidoreductase/NADH oxidase family. As to quaternary structure, homodimer. Forms a ternary complex with the heterodimeric electron transfer flavoprotein. It depends on FMN as a cofactor. [4Fe-4S] cluster serves as cofactor.

The catalysed reaction is trimethylamine + oxidized [electron-transfer flavoprotein] + H2O + H(+) = dimethylamine + reduced [electron-transfer flavoprotein] + formaldehyde. The sequence is that of Trimethylamine dehydrogenase from Methylophilus methylotrophus (Bacterium W3A1).